Here is a 342-residue protein sequence, read N- to C-terminus: Glycerol-3-phosphate dehydrogenase [NAD(P)+] (342 aa).

Residues Trp-11, Arg-33, and Lys-107 each contribute to the NADPH site. Sn-glycerol 3-phosphate is bound by residues Lys-107, Gly-143, and Ser-145. Ala-147 serves as a coordination point for NADPH. Positions 198, 251, 261, 262, and 263 each coordinate sn-glycerol 3-phosphate. Lys-198 serves as the catalytic Proton acceptor. Position 262 (Arg-262) interacts with NADPH. Residues Val-286 and Glu-288 each contribute to the NADPH site.

The protein belongs to the NAD-dependent glycerol-3-phosphate dehydrogenase family.

The protein resides in the cytoplasm. The catalysed reaction is sn-glycerol 3-phosphate + NAD(+) = dihydroxyacetone phosphate + NADH + H(+). It catalyses the reaction sn-glycerol 3-phosphate + NADP(+) = dihydroxyacetone phosphate + NADPH + H(+). It participates in membrane lipid metabolism; glycerophospholipid metabolism. Catalyzes the reduction of the glycolytic intermediate dihydroxyacetone phosphate (DHAP) to sn-glycerol 3-phosphate (G3P), the key precursor for phospholipid synthesis. This Paracidovorax citrulli (strain AAC00-1) (Acidovorax citrulli) protein is Glycerol-3-phosphate dehydrogenase [NAD(P)+].